The following is a 917-amino-acid chain: Probable dipeptidyl-aminopeptidase B (917 aa).

Residues 1–16 show a composition bias toward basic and acidic residues; the sequence is MATEKGHGRDDEERVP. The segment at 1 to 21 is disordered; the sequence is MATEKGHGRDDEERVPLTRGS. At 1–99 the chain is on the cytoplasmic side; the sequence is MATEKGHGRD…KPMHKSVKIA (99 aa). The chain crosses the membrane as a helical; Signal-anchor for type II membrane protein span at residues 100-120; it reads LWTLLFLSLGGWSLAFVLFIF. Topologically, residues 121–917 are vacuolar; it reads RSHDTYETPI…RAATWAGLSI (797 aa). N-linked (GlcNAc...) asparagine glycans are attached at residues Asn-135, Asn-351, and Asn-574. Residue Ser-756 is the Charge relay system of the active site. A glycan (N-linked (GlcNAc...) asparagine) is linked at Asn-815. Active-site charge relay system residues include Asp-833 and His-866. N-linked (GlcNAc...) asparagine glycosylation occurs at Asn-902.

This sequence belongs to the peptidase S9B family.

The protein resides in the vacuole membrane. It catalyses the reaction Release of an N-terminal dipeptide, Xaa-Yaa-|-Zaa-, from a polypeptide, preferentially when Yaa is Pro, provided Zaa is neither Pro nor hydroxyproline.. Functionally, type IV dipeptidyl-peptidase which removes N-terminal dipeptides sequentially from polypeptides having unsubstituted N-termini provided that the penultimate residue is proline. In Ajellomyces capsulatus (strain H88) (Darling's disease fungus), this protein is Probable dipeptidyl-aminopeptidase B (DAPB).